Consider the following 268-residue polypeptide: Centromere protein Q (268 aa).

The segment at 1–80 (MSGKANASKK…KTWQPLSKST (80 aa)) is disordered. Residues S31 and S50 each carry the phosphoserine modification. Over residues 58 to 72 (TNLKHGKTAASKRKT) the composition is skewed to basic residues. The stretch at 170 to 206 (ELMTGNIQSLKNKIQILASEVEEEEERVKQMHQINSS) forms a coiled coil. Residue S249 is modified to Phosphoserine.

The protein belongs to the CENP-Q/OKP1 family. In terms of assembly, component of the CENPA-CAD complex, composed of CENPI, CENPK, CENPL, CENPO, CENPP, CENPQ, CENPR and CENPS. The CENPA-CAD complex interacts with the CENPA-NAC complex, at least composed of CENPA, CENPC, CENPH, CENPM, CENPN, CENPT and CENPU. Phosphorylation at Ser-50 is essential for CENPE recruitment to kinetochores and orderly chromosome congression.

Its subcellular location is the nucleus. It localises to the chromosome. The protein localises to the centromere. In terms of biological role, component of the CENPA-CAD (nucleosome distal) complex, a complex recruited to centromeres which is involved in assembly of kinetochore proteins, mitotic progression and chromosome segregation. May be involved in incorporation of newly synthesized CENPA into centromeres via its interaction with the CENPA-NAC complex. Plays an important role in chromosome congression and in the recruitment of CENP-O complex (which comprises CENPO, CENPP, CENPQ and CENPU), CENPE and PLK1 to the kinetochores. The polypeptide is Centromere protein Q (CENPQ) (Homo sapiens (Human)).